The following is a 212-amino-acid chain: Imidazole glycerol phosphate synthase subunit HisH (212 aa).

The Glutamine amidotransferase type-1 domain occupies 1 to 212 (MLAILDYKAG…YAYCKEASRA (212 aa)). Residue Cys79 is the Nucleophile of the active site. Active-site residues include His187 and Glu189.

In terms of assembly, heterodimer of HisH and HisF.

The protein resides in the cytoplasm. It catalyses the reaction 5-[(5-phospho-1-deoxy-D-ribulos-1-ylimino)methylamino]-1-(5-phospho-beta-D-ribosyl)imidazole-4-carboxamide + L-glutamine = D-erythro-1-(imidazol-4-yl)glycerol 3-phosphate + 5-amino-1-(5-phospho-beta-D-ribosyl)imidazole-4-carboxamide + L-glutamate + H(+). The enzyme catalyses L-glutamine + H2O = L-glutamate + NH4(+). Its pathway is amino-acid biosynthesis; L-histidine biosynthesis; L-histidine from 5-phospho-alpha-D-ribose 1-diphosphate: step 5/9. IGPS catalyzes the conversion of PRFAR and glutamine to IGP, AICAR and glutamate. The HisH subunit catalyzes the hydrolysis of glutamine to glutamate and ammonia as part of the synthesis of IGP and AICAR. The resulting ammonia molecule is channeled to the active site of HisF. This is Imidazole glycerol phosphate synthase subunit HisH from Nitratidesulfovibrio vulgaris (strain DSM 19637 / Miyazaki F) (Desulfovibrio vulgaris).